A 368-amino-acid chain; its full sequence is 4-hydroxy-3-methylbut-2-en-1-yl diphosphate synthase (flavodoxin) (368 aa).

Residues Cys268, Cys271, Cys303, and Glu310 each coordinate [4Fe-4S] cluster.

This sequence belongs to the IspG family. [4Fe-4S] cluster is required as a cofactor.

It carries out the reaction (2E)-4-hydroxy-3-methylbut-2-enyl diphosphate + oxidized [flavodoxin] + H2O + 2 H(+) = 2-C-methyl-D-erythritol 2,4-cyclic diphosphate + reduced [flavodoxin]. The protein operates within isoprenoid biosynthesis; isopentenyl diphosphate biosynthesis via DXP pathway; isopentenyl diphosphate from 1-deoxy-D-xylulose 5-phosphate: step 5/6. Converts 2C-methyl-D-erythritol 2,4-cyclodiphosphate (ME-2,4cPP) into 1-hydroxy-2-methyl-2-(E)-butenyl 4-diphosphate. The chain is 4-hydroxy-3-methylbut-2-en-1-yl diphosphate synthase (flavodoxin) from Listeria monocytogenes serotype 4b (strain CLIP80459).